The primary structure comprises 1363 residues: Spike glycoprotein (1363 aa).

Residues 1-13 (MFLILLISLPTAF) form the signal peptide. The Extracellular segment spans residues 14-1307 (AVIGDLKCTT…GTYEYYVKWP (1294 aa)). The region spanning 15–298 (VIGDLKCTTV…DFMSEIKCKT (284 aa)) is the BetaCoV S1-NTD domain. 5 cysteine pairs are disulfide-bonded: Cys21–Cys165, Cys160–Cys193, Cys172–Cys252, Cys286–Cys296, and Cys331–Cys356. N-linked (GlcNAc...) asparagine; by host glycosylation is found at Asn59 and Asn133. An N-linked (GlcNAc...) asparagine; by host glycan is attached at Asn198. A BetaCoV S1-CTD domain is found at 329–617 (PDCNIEAWLN…DVNSGTTCST (289 aa)). N-linked (GlcNAc...) asparagine; by host glycosylation occurs at Asn359. Intrachain disulfides connect Cys374/Cys427 and Cys386/Cys615. N-linked (GlcNAc...) asparagine; by host glycosylation is found at Asn437, Asn649, Asn676, Asn696, Asn714, Asn739, and Asn788. Fusion peptide regions lie at residues 914–935 (SAIE…VEAY) and 933–953 (EAYN…VQSY). A glycan (N-linked (GlcNAc...) asparagine; by host) is linked at Asn937. Residues Cys938 and Cys949 are joined by a disulfide bond. The segment at 1014–1064 (QKLIANAFNNALGAIQEGFDATNSALVKIQAVVNANAEALNNLLQQLSNRF) is heptad repeat 1. Residues 1043-1087 (QAVVNANAEALNNLLQQLSNRFGAISSSLQEILSRLDALEAQAQI) adopt a coiled-coil conformation. Residues Asn1194, Asn1224, Asn1234, Asn1253, Asn1267, and Asn1288 are each glycosylated (N-linked (GlcNAc...) asparagine; by host). The interval 1258 to 1296 (APDLSLDYINVTFLDLQDEMNRLQEAIKVLNQSYINLKD) is heptad repeat 2. Positions 1269 to 1297 (TFLDLQDEMNRLQEAIKVLNQSYINLKDI) form a coiled coil. Residues 1308-1328 (WYVWLLIGFAGVAMLVLLFFI) traverse the membrane as a helical segment. The Cytoplasmic segment spans residues 1329 to 1363 (CCCTGCGTSCFKKCGGCCDDYTGHQELVIKTSHDD). A KxHxx motif is present at residues 1359–1363 (TSHDD).

This sequence belongs to the betacoronaviruses spike protein family. In terms of assembly, homotrimer; each monomer consists of a S1 and a S2 subunit. The resulting peplomers protrude from the virus surface as spikes. Specific enzymatic cleavages in vivo yield mature proteins. The precursor is processed into S1 and S2 by host cell furin or another cellular protease to yield the mature S1 and S2 proteins. Additionally, a second cleavage leads to the release of a fusion peptide after viral attachment to host cell receptor. In terms of processing, the cytoplasmic Cys-rich domain is palmitoylated. Spike glycoprotein is digested within host endosomes.

It localises to the virion membrane. The protein resides in the host endoplasmic reticulum-Golgi intermediate compartment membrane. Its subcellular location is the host cell membrane. Functionally, attaches the virion to the cell membrane by interacting with host receptor, initiating the infection. In terms of biological role, mediates fusion of the virion and cellular membranes by acting as a class I viral fusion protein. Under the current model, the protein has at least three conformational states: pre-fusion native state, pre-hairpin intermediate state, and post-fusion hairpin state. During viral and target cell membrane fusion, the coiled coil regions (heptad repeats) assume a trimer-of-hairpins structure, positioning the fusion peptide in close proximity to the C-terminal region of the ectodomain. The formation of this structure appears to drive apposition and subsequent fusion of viral and target cell membranes. Its function is as follows. Acts as a viral fusion peptide which is unmasked following S2 cleavage occurring upon virus endocytosis. The protein is Spike glycoprotein of Bos taurus (Bovine).